The primary structure comprises 367 residues: Probable thylakoidal processing peptidase 2, chloroplastic (367 aa).

The N-terminal 68 residues, 1–68 (MAIRVTFTYS…NTWGPSSGPR (68 aa)), are a transit peptide targeting the chloroplast. Residues 53 to 72 (DKSPGSNTWGPSSGPRARPA) form a disordered region. The span at 62-72 (GPSSGPRARPA) shows a compositional bias: low complexity. Residues 185 to 205 (EDAKAAFTAVTVSLLFRSALA) traverse the membrane as a helical segment. Residues 206-367 (EPKSIPSTSM…VSQKRAVDVS (162 aa)) lie on the Lumenal, thylakoid side of the membrane. S214 is a catalytic residue.

This sequence belongs to the peptidase S26 family.

It localises to the plastid. The protein resides in the chloroplast thylakoid membrane. It catalyses the reaction Cleavage of hydrophobic, N-terminal signal or leader sequences from secreted and periplasmic proteins.. Its function is as follows. Cleaves the thylakoid-transfer domain from a chloroplast protein. This chain is Probable thylakoidal processing peptidase 2, chloroplastic (TPP2), found in Arabidopsis thaliana (Mouse-ear cress).